Consider the following 178-residue polypeptide: Large ribosomal subunit protein uL6 (178 aa).

It belongs to the universal ribosomal protein uL6 family. Part of the 50S ribosomal subunit.

Functionally, this protein binds to the 23S rRNA, and is important in its secondary structure. It is located near the subunit interface in the base of the L7/L12 stalk, and near the tRNA binding site of the peptidyltransferase center. This is Large ribosomal subunit protein uL6 from Francisella tularensis subsp. mediasiatica (strain FSC147).